We begin with the raw amino-acid sequence, 215 residues long: Pyridoxine/pyridoxamine 5'-phosphate oxidase (215 aa).

Substrate contacts are provided by residues 9–12 (RRDY) and K69. FMN-binding positions include 64 to 69 (RVLLLK), 79 to 80 (FT), K86, and Q108. Residues Y126, R130, and S134 each contribute to the substrate site. Residues 143–144 (QS) and W188 contribute to the FMN site. Position 194 to 196 (194 to 196 (RLH)) interacts with substrate. An FMN-binding site is contributed by R198.

Belongs to the pyridoxamine 5'-phosphate oxidase family. As to quaternary structure, homodimer. The cofactor is FMN.

The enzyme catalyses pyridoxamine 5'-phosphate + O2 + H2O = pyridoxal 5'-phosphate + H2O2 + NH4(+). The catalysed reaction is pyridoxine 5'-phosphate + O2 = pyridoxal 5'-phosphate + H2O2. It participates in cofactor metabolism; pyridoxal 5'-phosphate salvage; pyridoxal 5'-phosphate from pyridoxamine 5'-phosphate: step 1/1. Its pathway is cofactor metabolism; pyridoxal 5'-phosphate salvage; pyridoxal 5'-phosphate from pyridoxine 5'-phosphate: step 1/1. Functionally, catalyzes the oxidation of either pyridoxine 5'-phosphate (PNP) or pyridoxamine 5'-phosphate (PMP) into pyridoxal 5'-phosphate (PLP). This is Pyridoxine/pyridoxamine 5'-phosphate oxidase from Pseudomonas syringae pv. syringae (strain B728a).